The primary structure comprises 800 residues: Nucleolar complex protein 3 homolog (800 aa).

Disordered stretches follow at residues 27-93 (KLKN…DMMD) and 160-187 (GIIP…RELE). The segment covering 40–51 (KKYRKEQRKLRQ) has biased composition (basic residues). Over residues 66-78 (NPKEKRPGKRIER) the composition is skewed to basic and acidic residues. The span at 79–93 (EEEEEEEALPLDMMD) shows a compositional bias: acidic residues. Basic and acidic residues predominate over residues 160–174 (GIIPQTREKPVTDSN). Residues 175–187 (KDEEDQEEERELE) are compositionally biased toward acidic residues. Lysine 333 participates in a covalent cross-link: Glycyl lysine isopeptide (Lys-Gly) (interchain with G-Cter in SUMO2). Positions 451–490 (KEKRKSLSRMQRKWKKAEEKLERELREAEASESTEKKLKL) form a coiled coil. Serine 787 bears the Phosphoserine mark.

Belongs to the CBF/MAK21 family. Expressed in colon, heart, kidney, liver, lung, placenta, skeletal muscle, small intestine, spleen and thymus.

It is found in the nucleus. Its subcellular location is the nucleolus. The protein localises to the nucleus speckle. Its function is as follows. May be required for adipogenesis. This chain is Nucleolar complex protein 3 homolog (NOC3L), found in Homo sapiens (Human).